The chain runs to 989 residues: Putative transcription elongation factor SPT5 homolog 2 (989 aa).

The span at 1 to 26 (MSQYSDDDYSHEDDSEMEDEDEEDEY) shows a compositional bias: acidic residues. Positions 1 to 82 (MSQYSDDDYS…VEDDDDDVDV (82 aa)) are disordered. Positions 31–42 (SRKGRSGKKRGR) are enriched in basic residues. Over residues 65-82 (WEVEVDDDVEDDDDDVDV) the composition is skewed to acidic residues. KOW domains lie at 260 to 287 (DLSR…VDNV), 412 to 439 (HFMK…VDEE), 464 to 491 (YFEP…VDQH), 588 to 615 (VVAV…IYKG), and 683 to 710 (DHLV…VKDK). The disordered stretch occupies residues 790 to 852 (MSPPRDNWED…SPMTPSSTSY (63 aa)). Over residues 842–852 (PSPMTPSSTSY) the composition is skewed to low complexity. A KOW 6 domain is found at 936–963 (CPKKNERVKILGGKYCGSTAKVIGEDGQ).

It belongs to the SPT5 family.

The protein resides in the nucleus. In terms of biological role, may regulate transcription elongation by RNA polymerase II. May enhance transcriptional pausing at sites proximal to the promoter, which may in turn facilitate the assembly of an elongation competent RNA polymerase II complex. This is Putative transcription elongation factor SPT5 homolog 2 from Arabidopsis thaliana (Mouse-ear cress).